We begin with the raw amino-acid sequence, 1191 residues long: DNA-directed RNA polymerase subunit beta (1191 aa).

The span at 1171–1181 shows a compositional bias: basic and acidic residues; that stretch reads RVKQEAEEKQA. A disordered region spans residues 1171–1191; it reads RVKQEAEEKQAEQVSEVVQED. The span at 1182-1191 shows a compositional bias: low complexity; the sequence is EQVSEVVQED.

The protein belongs to the RNA polymerase beta chain family. In terms of assembly, the RNAP catalytic core consists of 2 alpha, 1 beta, 1 beta' and 1 omega subunit. When a sigma factor is associated with the core the holoenzyme is formed, which can initiate transcription.

The enzyme catalyses RNA(n) + a ribonucleoside 5'-triphosphate = RNA(n+1) + diphosphate. Its function is as follows. DNA-dependent RNA polymerase catalyzes the transcription of DNA into RNA using the four ribonucleoside triphosphates as substrates. The sequence is that of DNA-directed RNA polymerase subunit beta from Streptococcus agalactiae serotype Ia (strain ATCC 27591 / A909 / CDC SS700).